The following is a 124-amino-acid chain: UPF0231 protein Sama_0645 (124 aa).

This sequence belongs to the UPF0231 family.

The polypeptide is UPF0231 protein Sama_0645 (Shewanella amazonensis (strain ATCC BAA-1098 / SB2B)).